A 318-amino-acid chain; its full sequence is Trans-prenyltransferase (318 aa).

Residues 1-21 (MLHLIYISIIVVLIIILISYT) form a helical membrane-spanning segment. Lys85, Arg88, and His122 together coordinate isopentenyl diphosphate. Mg(2+) is bound by residues Asp129 and Asp135. Arg140 provides a ligand contact to dimethylallyl diphosphate. Isopentenyl diphosphate is bound at residue Arg141. Positions 216, 217, and 254 each coordinate dimethylallyl diphosphate.

Belongs to the FPP/GGPP synthase family. Asfivirus trans-prenyltransferase subfamily. Requires Mg(2+) as cofactor.

It is found in the host endoplasmic reticulum. The protein resides in the host membrane. It catalyses the reaction isopentenyl diphosphate + dimethylallyl diphosphate = (2E)-geranyl diphosphate + diphosphate. The catalysed reaction is isopentenyl diphosphate + (2E)-geranyl diphosphate = (2E,6E)-farnesyl diphosphate + diphosphate. It carries out the reaction isopentenyl diphosphate + (2E,6E)-farnesyl diphosphate = (2E,6E,10E)-geranylgeranyl diphosphate + diphosphate. The enzyme catalyses isopentenyl diphosphate + (2E,6E,10E)-geranylgeranyl diphosphate = (2E,6E,10E,14E)-geranylfarnesyl diphosphate + diphosphate. The protein operates within isoprenoid biosynthesis; farnesyl diphosphate biosynthesis; farnesyl diphosphate from geranyl diphosphate and isopentenyl diphosphate: step 1/1. Its pathway is isoprenoid biosynthesis; geranyl diphosphate biosynthesis; geranyl diphosphate from dimethylallyl diphosphate and isopentenyl diphosphate: step 1/1. It functions in the pathway isoprenoid biosynthesis; geranylgeranyl diphosphate biosynthesis; geranylgeranyl diphosphate from farnesyl diphosphate and isopentenyl diphosphate: step 1/1. Functionally, trans-prenyltransferase that catalyzes the sequential condensation of isopentenyl diphosphate (IPP) with different allylic diphosphates, such as dimethylallyl diphosphate (DMAPP), geranyl diphosphate (GPP), farnesyl diphosphate (FPP) and geranylgeranyl diphosphate (GGPP), farnesyl diphosphate being the best allylic substrate. This African swine fever virus (isolate Tick/Malawi/Lil 20-1/1983) (ASFV) protein is Trans-prenyltransferase.